The sequence spans 313 residues: 4-diphosphocytidyl-2-C-methyl-D-erythritol kinase (313 aa).

Lys27 is an active-site residue. 110-120 (PIGGGVGGGSS) contributes to the ATP binding site. Asp152 is a catalytic residue.

It belongs to the GHMP kinase family. IspE subfamily.

It catalyses the reaction 4-CDP-2-C-methyl-D-erythritol + ATP = 4-CDP-2-C-methyl-D-erythritol 2-phosphate + ADP + H(+). Its pathway is isoprenoid biosynthesis; isopentenyl diphosphate biosynthesis via DXP pathway; isopentenyl diphosphate from 1-deoxy-D-xylulose 5-phosphate: step 3/6. Catalyzes the phosphorylation of the position 2 hydroxy group of 4-diphosphocytidyl-2C-methyl-D-erythritol. The chain is 4-diphosphocytidyl-2-C-methyl-D-erythritol kinase from Histophilus somni (strain 2336) (Haemophilus somnus).